Consider the following 348-residue polypeptide: Holliday junction branch migration complex subunit RuvB (348 aa).

Residues 4 to 184 are large ATPase domain (RuvB-L); it reads ADRLIAASGR…FGIVQRLEFY (181 aa). ATP contacts are provided by residues I23, R24, G65, K68, T69, T70, 131–133, R174, Y184, and R221; that span reads EDF. T69 provides a ligand contact to Mg(2+). The tract at residues 185–255 is small ATPAse domain (RuvB-S); sequence NDKDLSTIVS…VADMALNLLD (71 aa). The interval 258–348 is head domain (RuvB-H); it reads ERGFDHSDRR…GGDFSEPGDE (91 aa). DNA-binding residues include R294, R313, and R318.

Belongs to the RuvB family. In terms of assembly, homohexamer. Forms an RuvA(8)-RuvB(12)-Holliday junction (HJ) complex. HJ DNA is sandwiched between 2 RuvA tetramers; dsDNA enters through RuvA and exits via RuvB. An RuvB hexamer assembles on each DNA strand where it exits the tetramer. Each RuvB hexamer is contacted by two RuvA subunits (via domain III) on 2 adjacent RuvB subunits; this complex drives branch migration. In the full resolvosome a probable DNA-RuvA(4)-RuvB(12)-RuvC(2) complex forms which resolves the HJ.

It localises to the cytoplasm. It catalyses the reaction ATP + H2O = ADP + phosphate + H(+). Functionally, the RuvA-RuvB-RuvC complex processes Holliday junction (HJ) DNA during genetic recombination and DNA repair, while the RuvA-RuvB complex plays an important role in the rescue of blocked DNA replication forks via replication fork reversal (RFR). RuvA specifically binds to HJ cruciform DNA, conferring on it an open structure. The RuvB hexamer acts as an ATP-dependent pump, pulling dsDNA into and through the RuvAB complex. RuvB forms 2 homohexamers on either side of HJ DNA bound by 1 or 2 RuvA tetramers; 4 subunits per hexamer contact DNA at a time. Coordinated motions by a converter formed by DNA-disengaged RuvB subunits stimulates ATP hydrolysis and nucleotide exchange. Immobilization of the converter enables RuvB to convert the ATP-contained energy into a lever motion, pulling 2 nucleotides of DNA out of the RuvA tetramer per ATP hydrolyzed, thus driving DNA branch migration. The RuvB motors rotate together with the DNA substrate, which together with the progressing nucleotide cycle form the mechanistic basis for DNA recombination by continuous HJ branch migration. Branch migration allows RuvC to scan DNA until it finds its consensus sequence, where it cleaves and resolves cruciform DNA. This Pseudomonas putida (strain ATCC 47054 / DSM 6125 / CFBP 8728 / NCIMB 11950 / KT2440) protein is Holliday junction branch migration complex subunit RuvB.